The sequence spans 142 residues: MTIERTFSIVKPNAVAKNAIGAIYARFESAGFTIVASKMLRLSREQAEGFYAEHKGKPFFDGLVEFMMSGPIMVQALEGENAVQRNRDIMGATNPANALAGTLRADYADSFTANAVHGSDSIESAQREIAYFFSDDEICPRA.

ATP-binding residues include Lys-11, Phe-59, Arg-87, Thr-93, Arg-104, and Asn-114. The active-site Pros-phosphohistidine intermediate is the His-117.

Belongs to the NDK family. As to quaternary structure, homotetramer. Mg(2+) serves as cofactor.

The protein resides in the cytoplasm. The catalysed reaction is a 2'-deoxyribonucleoside 5'-diphosphate + ATP = a 2'-deoxyribonucleoside 5'-triphosphate + ADP. It catalyses the reaction a ribonucleoside 5'-diphosphate + ATP = a ribonucleoside 5'-triphosphate + ADP. In terms of biological role, major role in the synthesis of nucleoside triphosphates other than ATP. The ATP gamma phosphate is transferred to the NDP beta phosphate via a ping-pong mechanism, using a phosphorylated active-site intermediate. This Pectobacterium atrosepticum (strain SCRI 1043 / ATCC BAA-672) (Erwinia carotovora subsp. atroseptica) protein is Nucleoside diphosphate kinase.